A 176-amino-acid chain; its full sequence is Ribosome maturation factor RimP (176 aa).

Belongs to the RimP family.

It is found in the cytoplasm. Functionally, required for maturation of 30S ribosomal subunits. This Chlorobium limicola (strain DSM 245 / NBRC 103803 / 6330) protein is Ribosome maturation factor RimP.